Reading from the N-terminus, the 130-residue chain is Small ribosomal subunit protein uS9 (130 aa).

The protein belongs to the universal ribosomal protein uS9 family.

The protein is Small ribosomal subunit protein uS9 of Haemophilus influenzae (strain 86-028NP).